The chain runs to 186 residues: Nascent polypeptide-associated complex subunit beta (186 aa).

Residues 65 to 130 (GADDKKLQTT…GEEKELTELV (66 aa)) enclose the NAC-A/B domain. Positions 153 to 186 (QNMQKQAGAEGKKDEDEDDIPDLVEGENFESNVE) are disordered. A compositionally biased stretch (acidic residues) spans 167–186 (EDEDDIPDLVEGENFESNVE).

The protein belongs to the NAC-beta family. Part of the nascent polypeptide-associated complex (NAC), consisting of egd2 and egd1. NAC associates with ribosomes via egd1.

Its subcellular location is the cytoplasm. It is found in the nucleus. In terms of biological role, component of the nascent polypeptide-associated complex (NAC), a dynamic component of the ribosomal exit tunnel, protecting the emerging polypeptides from interaction with other cytoplasmic proteins to ensure appropriate nascent protein targeting. The NAC complex also promotes mitochondrial protein import by enhancing productive ribosome interactions with the outer mitochondrial membrane and blocks the inappropriate interaction of ribosomes translating non-secretory nascent polypeptides with translocation sites in the membrane of the endoplasmic reticulum. EGD1 may act as a transcription factor that exert a negative effect on the expression of several genes that are transcribed by RNA polymerase II. This Aspergillus fumigatus (strain ATCC MYA-4609 / CBS 101355 / FGSC A1100 / Af293) (Neosartorya fumigata) protein is Nascent polypeptide-associated complex subunit beta (egd1).